The chain runs to 616 residues: Chaperone protein HscA (616 aa).

The protein belongs to the heat shock protein 70 family.

Functionally, chaperone involved in the maturation of iron-sulfur cluster-containing proteins. Has a low intrinsic ATPase activity which is markedly stimulated by HscB. Involved in the maturation of IscU. This Escherichia coli O45:K1 (strain S88 / ExPEC) protein is Chaperone protein HscA.